A 106-amino-acid polypeptide reads, in one-letter code: Biogenesis of lysosome-related organelles complex 1 subunit 4 (106 aa).

Positions 53-106 form a coiled coil; that stretch reads THSEGLSEQLKMTEKNILEMENLFDQIDQLCLFVQKAKSDLDKLEKLYNVVDRQ.

The protein belongs to the BLOC1S4 family. Component of the biogenesis of lysosome-related organelles complex-1 (BLOC-1) composed at least of blos-1, blos-2, blos-4, dsbn-1, glo-2, mutd-1 and snpn-1. Interacts with glo-2.

In terms of biological role, component of the biogenesis of lysosome-related organelles complex-1 (BLOC-1) involved in gut granule biogenesis. This is Biogenesis of lysosome-related organelles complex 1 subunit 4 (blos-4) from Caenorhabditis elegans.